The sequence spans 284 residues: Digeranylgeranylglyceryl phosphate synthase (284 aa).

7 helical membrane passes run Ile-10–Trp-30, Leu-37–Val-57, Ala-76–Ala-98, Tyr-102–Ala-119, Gly-126–Leu-146, Leu-217–Ile-237, and Gly-260–Phe-280.

This sequence belongs to the UbiA prenyltransferase family. DGGGP synthase subfamily. Mg(2+) serves as cofactor.

It is found in the cell membrane. It carries out the reaction sn-3-O-(geranylgeranyl)glycerol 1-phosphate + (2E,6E,10E)-geranylgeranyl diphosphate = 2,3-bis-O-(geranylgeranyl)-sn-glycerol 1-phosphate + diphosphate. It participates in membrane lipid metabolism; glycerophospholipid metabolism. Functionally, prenyltransferase that catalyzes the transfer of the geranylgeranyl moiety of geranylgeranyl diphosphate (GGPP) to the C2 hydroxyl of (S)-3-O-geranylgeranylglyceryl phosphate (GGGP). This reaction is the second ether-bond-formation step in the biosynthesis of archaeal membrane lipids. This chain is Digeranylgeranylglyceryl phosphate synthase, found in Metallosphaera sedula (strain ATCC 51363 / DSM 5348 / JCM 9185 / NBRC 15509 / TH2).